The sequence spans 207 residues: Dephospho-CoA kinase (207 aa).

The DPCK domain occupies 10–207; sequence ILGLTGGIGS…FYLTLKGGQP (198 aa). An ATP-binding site is contributed by 18 to 23; that stretch reads GSGKSA.

This sequence belongs to the CoaE family.

It localises to the cytoplasm. It catalyses the reaction 3'-dephospho-CoA + ATP = ADP + CoA + H(+). It participates in cofactor biosynthesis; coenzyme A biosynthesis; CoA from (R)-pantothenate: step 5/5. Functionally, catalyzes the phosphorylation of the 3'-hydroxyl group of dephosphocoenzyme A to form coenzyme A. This Pseudomonas putida (strain ATCC 47054 / DSM 6125 / CFBP 8728 / NCIMB 11950 / KT2440) protein is Dephospho-CoA kinase.